A 251-amino-acid polypeptide reads, in one-letter code: Geranylgeranylglyceryl phosphate synthase (251 aa).

Positions 25 and 54 each coordinate Mg(2+). Sn-glycerol 1-phosphate is bound by residues 173–179 (YLEAGSG), 204–205 (GG), and 226–227 (GT).

The protein belongs to the GGGP/HepGP synthase family. Group II subfamily. Mg(2+) is required as a cofactor.

The protein localises to the cytoplasm. It carries out the reaction sn-glycerol 1-phosphate + (2E,6E,10E)-geranylgeranyl diphosphate = sn-3-O-(geranylgeranyl)glycerol 1-phosphate + diphosphate. It functions in the pathway membrane lipid metabolism; glycerophospholipid metabolism. Prenyltransferase that catalyzes the transfer of the geranylgeranyl moiety of geranylgeranyl diphosphate (GGPP) to the C3 hydroxyl of sn-glycerol-1-phosphate (G1P). This reaction is the first ether-bond-formation step in the biosynthesis of archaeal membrane lipids. The sequence is that of Geranylgeranylglyceryl phosphate synthase from Pyrococcus furiosus (strain ATCC 43587 / DSM 3638 / JCM 8422 / Vc1).